The primary structure comprises 813 residues: LPS-assembly protein LptD (813 aa).

The signal sequence occupies residues 1–22 (MRRALRLLPLPLSIAICLPAMA).

This sequence belongs to the LptD family. As to quaternary structure, component of the lipopolysaccharide transport and assembly complex. Interacts with LptE and LptA.

It localises to the cell outer membrane. Functionally, together with LptE, is involved in the assembly of lipopolysaccharide (LPS) at the surface of the outer membrane. The protein is LPS-assembly protein LptD of Xanthomonas oryzae pv. oryzae (strain MAFF 311018).